Consider the following 390-residue polypeptide: EF-hand calcium-binding domain-containing protein 4A (390 aa).

Residues 1-27 (MSPRSTLRSPLPSRTARSSASSDTPSP) show a composition bias toward low complexity. The interval 1-37 (MSPRSTLRSPLPSRTARSSASSDTPSPGADRQDRMSK) is disordered. EF-hand domains are found at residues 33–66 (DRMS…QELP) and 67–102 (LSPE…LVGS). The Ca(2+) site is built by aspartate 80, aspartate 82, asparagine 84, tyrosine 86, and glutamate 91. Residues 173-357 (SHLQDALKEK…DDKDAHQAQK (185 aa)) adopt a coiled-coil conformation. The segment at 206-234 (DMESQLKEERERRQALDSMRQGDKKEQLL) is disordered.

This sequence belongs to the EFCAB4 family.

The protein is EF-hand calcium-binding domain-containing protein 4A (cracr2b) of Danio rerio (Zebrafish).